Here is a 368-residue protein sequence, read N- to C-terminus: Glutamate 5-kinase (368 aa).

An ATP-binding site is contributed by lysine 11. Residues serine 51, aspartate 138, and asparagine 150 each contribute to the substrate site. ATP is bound by residues 170–171 (TD) and 212–218 (TGGMATK). The PUA domain maps to 276–354 (AGEIIVDHGA…QQISQILGYE (79 aa)).

It belongs to the glutamate 5-kinase family.

The protein resides in the cytoplasm. The catalysed reaction is L-glutamate + ATP = L-glutamyl 5-phosphate + ADP. The protein operates within amino-acid biosynthesis; L-proline biosynthesis; L-glutamate 5-semialdehyde from L-glutamate: step 1/2. In terms of biological role, catalyzes the transfer of a phosphate group to glutamate to form L-glutamate 5-phosphate. The polypeptide is Glutamate 5-kinase (Photorhabdus laumondii subsp. laumondii (strain DSM 15139 / CIP 105565 / TT01) (Photorhabdus luminescens subsp. laumondii)).